The following is a 427-amino-acid chain: Peptidase B (427 aa).

Mn(2+)-binding residues include K195 and D200. The active site involves K207. Mn(2+)-binding residues include D218, D277, and E279. R281 is a catalytic residue.

The protein belongs to the peptidase M17 family. In terms of assembly, homohexamer. Mn(2+) serves as cofactor.

The protein localises to the cytoplasm. It carries out the reaction Release of an N-terminal amino acid, Xaa, from a peptide or arylamide. Xaa is preferably Glu or Asp but may be other amino acids, including Leu, Met, His, Cys and Gln.. Probably plays an important role in intracellular peptide degradation. The sequence is that of Peptidase B from Salmonella typhi.